We begin with the raw amino-acid sequence, 360 residues long: Photosystem II protein D1 (360 aa).

3 consecutive transmembrane segments (helical) span residues 29–46 (YIGW…TATT), 118–133 (HFLL…EWEF), and 142–156 (WISV…AASA). Chlorophyll a is bound at residue H118. W126 contacts pheophytin a. 2 residues coordinate [CaMn4O5] cluster: D170 and E189. The helical transmembrane segment at 197–218 (FHQLGVAGVFGGSLFSAMHGSL) threads the bilayer. Chlorophyll a is bound at residue H198. Residues H215 and 264 to 265 (SF) contribute to the a quinone site. Residue H215 participates in Fe cation binding. H272 lines the Fe cation pocket. A helical transmembrane segment spans residues 274–288 (FLGLWPVVGIWFTAL). Residues H332, E333, D342, and A344 each contribute to the [CaMn4O5] cluster site. A propeptide spanning residues 345–360 (SGESLPVALTAPAVIG) is cleaved from the precursor.

It belongs to the reaction center PufL/M/PsbA/D family. In terms of assembly, PSII is composed of 1 copy each of membrane proteins PsbA, PsbB, PsbC, PsbD, PsbE, PsbF, PsbH, PsbI, PsbJ, PsbK, PsbL, PsbM, PsbT, PsbX, PsbY, PsbZ, Psb30/Ycf12, at least 3 peripheral proteins of the oxygen-evolving complex and a large number of cofactors. It forms dimeric complexes. It depends on The D1/D2 heterodimer binds P680, chlorophylls that are the primary electron donor of PSII, and subsequent electron acceptors. It shares a non-heme iron and each subunit binds pheophytin, quinone, additional chlorophylls, carotenoids and lipids. D1 provides most of the ligands for the Mn4-Ca-O5 cluster of the oxygen-evolving complex (OEC). There is also a Cl(-1) ion associated with D1 and D2, which is required for oxygen evolution. The PSII complex binds additional chlorophylls, carotenoids and specific lipids. as a cofactor. Post-translationally, tyr-161 forms a radical intermediate that is referred to as redox-active TyrZ, YZ or Y-Z. C-terminally processed by CTPA; processing is essential to allow assembly of the oxygen-evolving complex and thus photosynthetic growth.

Its subcellular location is the plastid. The protein localises to the chloroplast thylakoid membrane. It catalyses the reaction 2 a plastoquinone + 4 hnu + 2 H2O = 2 a plastoquinol + O2. In terms of biological role, photosystem II (PSII) is a light-driven water:plastoquinone oxidoreductase that uses light energy to abstract electrons from H(2)O, generating O(2) and a proton gradient subsequently used for ATP formation. It consists of a core antenna complex that captures photons, and an electron transfer chain that converts photonic excitation into a charge separation. The D1/D2 (PsbA/PsbD) reaction center heterodimer binds P680, the primary electron donor of PSII as well as several subsequent electron acceptors. This is Photosystem II protein D1 from Guillardia theta (Cryptophyte).